Reading from the N-terminus, the 312-residue chain is Aspartate carbamoyltransferase catalytic subunit (312 aa).

Carbamoyl phosphate-binding residues include R55 and T56. K83 contacts L-aspartate. Carbamoyl phosphate is bound by residues R105, H138, and Q141. L-aspartate-binding residues include R171 and R225. Residues G266 and P267 each coordinate carbamoyl phosphate.

This sequence belongs to the aspartate/ornithine carbamoyltransferase superfamily. ATCase family. As to quaternary structure, heterododecamer (2C3:3R2) of six catalytic PyrB chains organized as two trimers (C3), and six regulatory PyrI chains organized as three dimers (R2).

The enzyme catalyses carbamoyl phosphate + L-aspartate = N-carbamoyl-L-aspartate + phosphate + H(+). It participates in pyrimidine metabolism; UMP biosynthesis via de novo pathway; (S)-dihydroorotate from bicarbonate: step 2/3. Functionally, catalyzes the condensation of carbamoyl phosphate and aspartate to form carbamoyl aspartate and inorganic phosphate, the committed step in the de novo pyrimidine nucleotide biosynthesis pathway. The sequence is that of Aspartate carbamoyltransferase catalytic subunit from Corynebacterium efficiens (strain DSM 44549 / YS-314 / AJ 12310 / JCM 11189 / NBRC 100395).